A 182-amino-acid chain; its full sequence is MKVLAVTGYKPFELGIFKQDDQALVYIKKAIETRLRSFIDEGLEWILISGQLGTELWAAETAYDLREEYPELKVAVITPFYGQEEKWKEPNKEMYEAVLAQADYEESLTHRPYESPLQFRQKNAFFIEKSDALLLLYDPEMEGSPKYMLQQAEKRRETDGYPIYSITMDDLRAAVEEEDFFT.

Belongs to the UPF0398 family.

The chain is UPF0398 protein RBAM_020340 from Bacillus velezensis (strain DSM 23117 / BGSC 10A6 / LMG 26770 / FZB42) (Bacillus amyloliquefaciens subsp. plantarum).